The following is a 1888-amino-acid chain: Nuclear pore membrane glycoprotein 210-like (1888 aa).

An N-terminal signal peptide occupies residues 1-35 (MTGCPASSRRRGFGLFFFLRLHRLLLLFLVLRGTL). N-linked (GlcNAc...) asparagine glycosylation is found at N84, N304, N348, N495, N522, N812, and N931. The region spanning 1082-1154 (FPPFRLLPEK…TIQTVNEDTG (73 aa)) is the BIG2 domain. Residue N1445 is glycosylated (N-linked (GlcNAc...) asparagine). Residues 1813-1833 (ILLLTLFAVLASTASIFLAYN) traverse the membrane as a helical segment. The N-linked (GlcNAc...) asparagine glycan is linked to N1859.

The protein belongs to the NUP210 family.

The protein localises to the nucleus membrane. The protein is Nuclear pore membrane glycoprotein 210-like (NUP210L) of Homo sapiens (Human).